The primary structure comprises 554 residues: Glucose-6-phosphate isomerase (554 aa).

Glutamate 358 functions as the Proton donor in the catalytic mechanism. Active-site residues include histidine 389 and lysine 515. Residues 527–540 (ADNSPAPQSDSSTD) show a composition bias toward polar residues. The segment at 527–554 (ADNSPAPQSDSSTDALVRRYRSERGRTS) is disordered. Positions 542–554 (LVRRYRSERGRTS) are enriched in basic and acidic residues.

This sequence belongs to the GPI family.

It is found in the cytoplasm. The enzyme catalyses alpha-D-glucose 6-phosphate = beta-D-fructose 6-phosphate. The protein operates within carbohydrate biosynthesis; gluconeogenesis. Its pathway is carbohydrate degradation; glycolysis; D-glyceraldehyde 3-phosphate and glycerone phosphate from D-glucose: step 2/4. Its function is as follows. Catalyzes the reversible isomerization of glucose-6-phosphate to fructose-6-phosphate. The protein is Glucose-6-phosphate isomerase of Mycobacterium avium (strain 104).